Here is a 436-residue protein sequence, read N- to C-terminus: Protein translocase subunit SecY (436 aa).

The next 10 membrane-spanning stretches (helical) occupy residues 18 to 38, 69 to 89, 116 to 138, 154 to 174, 187 to 207, 214 to 234, 266 to 286, 314 to 334, 375 to 395, and 396 to 416; these read IAFTLGLIAVYRMGDFVPATG, LLQVSVFALGIMPYITASIIV, YTRYLTLALALLQATTMASLART, ILTVLLVVIALTTGCLIVMWF, MSLLIFTSIAAGFPAGLGQVV, VFAIVMGIGLLTMLAIVFVEE, MANVIPVIFASSVLMLPGILI, PVYMALYFLLIIGFTYFYVSI, VVGALYLGIVAMIPLIAFAVI, and GTSQNFPLGGTSILIMVGVGL.

It belongs to the SecY/SEC61-alpha family. Component of the Sec protein translocase complex. Heterotrimer consisting of SecY, SecE and SecG subunits. The heterotrimers can form oligomers, although 1 heterotrimer is thought to be able to translocate proteins. Interacts with the ribosome. Interacts with SecDF, and other proteins may be involved. Interacts with SecA.

The protein resides in the cell membrane. Its function is as follows. The central subunit of the protein translocation channel SecYEG. Consists of two halves formed by TMs 1-5 and 6-10. These two domains form a lateral gate at the front which open onto the bilayer between TMs 2 and 7, and are clamped together by SecE at the back. The channel is closed by both a pore ring composed of hydrophobic SecY resides and a short helix (helix 2A) on the extracellular side of the membrane which forms a plug. The plug probably moves laterally to allow the channel to open. The ring and the pore may move independently. The sequence is that of Protein translocase subunit SecY from Micrococcus luteus (Micrococcus lysodeikticus).